A 106-amino-acid polypeptide reads, in one-letter code: Large ribosomal subunit protein P2 (106 aa).

A disordered region spans residues 80-106 (AAAAPAKKVVEEKKEESDDDMGMGLFD).

It belongs to the eukaryotic ribosomal protein P1/P2 family. As to quaternary structure, P1 and P2 exist as dimers at the large ribosomal subunit. Post-translationally, phosphorylated.

Its function is as follows. Plays an important role in the elongation step of protein synthesis. This is Large ribosomal subunit protein P2 (rplp2) from Dictyostelium discoideum (Social amoeba).